A 98-amino-acid polypeptide reads, in one-letter code: Class II hydrophobin 2 (98 aa).

Positions 1-21 are cleaved as a signal peptide; that stretch reads MFFSRISTIVSMTALFASALA. Intrachain disulfides connect Cys-34/Cys-80, Cys-41/Cys-71, Cys-42/Cys-54, and Cys-81/Cys-92.

It belongs to the cerato-ulmin hydrophobin family.

It localises to the secreted. The protein localises to the cell wall. In terms of biological role, aerial growth, conidiation, and dispersal of filamentous fungi in the environment rely upon a capability of their secreting small amphipathic proteins called hydrophobins (HPBs) with low sequence identity. Class I can self-assemble into an outermost layer of rodlet bundles on aerial cell surfaces, conferring cellular hydrophobicity that supports fungal growth, development and dispersal; whereas Class II form highly ordered films at water-air interfaces through intermolecular interactions but contribute nothing to the rodlet structure. In Botryotinia fuckeliana, hydrophobins are not involved in conferring surface hydrophobicity to conidia and aerial hyphae and their function in sclerotia and fruiting bodies remains to be investigated. The sequence is that of Class II hydrophobin 2 from Botryotinia fuckeliana (strain B05.10) (Noble rot fungus).